Consider the following 781-residue polypeptide: Matrix non-peptidase homolog 1 (781 aa).

Residues 1-27 (MTPPPASPSKKAKSSWLLIALIAVIIG) form the signal peptide. Asparagine 54 is a glycosylation site (N-linked (GlcNAc...) asparagine). Over residues 63-94 (TSKATVSTTTTQSATTPSTTTTRIEETTTTTS) the composition is skewed to low complexity. Residues 63 to 113 (TSKATVSTTTTQSATTPSTTTTRIEETTTTTSGAFDESVKNSEASTSTIPT) are disordered. Residues asparagine 183, asparagine 341, asparagine 375, and asparagine 520 are each glycosylated (N-linked (GlcNAc...) asparagine).

The sequence is that of Matrix non-peptidase homolog 1 (mnp-1) from Caenorhabditis elegans.